Here is a 516-residue protein sequence, read N- to C-terminus: Bifunctional pantoate ligase/cytidylate kinase (516 aa).

Residues 1–279 (MVRKIFQTNA…CGSTRLIDHT (279 aa)) are pantoate--beta-alanine ligase. ATP is bound at residue 29–36 (MGGLHPGH). His-36 acts as the Proton donor in catalysis. Gln-64 is a (R)-pantoate binding site. Gln-64 is a beta-alanine binding site. Residue 153 to 156 (GEKD) coordinates ATP. A (R)-pantoate-binding site is contributed by Gln-159. Residue 190–193 (YSSR) participates in ATP binding. Residues 280-516 (FLMHRKPIIA…PEEVWPTPNS (237 aa)) are cytidylate kinase.

In the N-terminal section; belongs to the pantothenate synthetase family. The protein in the C-terminal section; belongs to the cytidylate kinase family. Type 1 subfamily.

It is found in the cytoplasm. The enzyme catalyses (R)-pantoate + beta-alanine + ATP = (R)-pantothenate + AMP + diphosphate + H(+). It catalyses the reaction CMP + ATP = CDP + ADP. The catalysed reaction is dCMP + ATP = dCDP + ADP. It functions in the pathway cofactor biosynthesis; (R)-pantothenate biosynthesis; (R)-pantothenate from (R)-pantoate and beta-alanine: step 1/1. Its function is as follows. Catalyzes the condensation of pantoate with beta-alanine in an ATP-dependent reaction via a pantoyl-adenylate intermediate. Functionally, catalyzes the transfer of a phosphate group from ATP to either CMP or dCMP to form CDP or dCDP and ADP, respectively. The protein is Bifunctional pantoate ligase/cytidylate kinase of Prochlorococcus marinus (strain NATL2A).